Reading from the N-terminus, the 621-residue chain is Autonomous transposable element EN-1 mosaic protein (621 aa).

Disordered stretches follow at residues Met1–Arg119, Tyr428–Arg447, Gln498–Gln530, and Arg549–Glu621. 2 stretches are compositionally biased toward polar residues: residues Glu27–Leu39 and Arg47–Arg61. A compositionally biased stretch (acidic residues) spans Ala82 to Ser102. Over residues Pro570 to Ala594 the composition is skewed to low complexity.

Its function is as follows. This protein has most probably three functions; the mutator (M) function, for excision and transposition; the suppressor (S) function, which inhibits residual gene activity of certain alleles in which inhibitor elements are integrated; an activator (A) function is proposed, because inactive SPM can be activated by a second SPM. The protein is Autonomous transposable element EN-1 mosaic protein of Zea mays (Maize).